The sequence spans 128 residues: Cystatin-12 (128 aa).

A signal peptide spans 1–21 (MLWKSVLPVALIVLGIHDCSF). Intrachain disulfides connect C82-C92 and C105-C125. Residue N122 is glycosylated (N-linked (GlcNAc...) asparagine).

It belongs to the cystatin family.

Its subcellular location is the secreted. In terms of biological role, may play a specialized role in spermatogenesis. This Rattus norvegicus (Rat) protein is Cystatin-12 (Cst12).